Consider the following 88-residue polypeptide: UPF0473 protein CLL_A1177 (88 aa).

Belongs to the UPF0473 family.

The polypeptide is UPF0473 protein CLL_A1177 (Clostridium botulinum (strain Eklund 17B / Type B)).